The chain runs to 425 residues: Gamma-glutamyl phosphate reductase (425 aa).

This sequence belongs to the gamma-glutamyl phosphate reductase family.

The protein localises to the cytoplasm. The catalysed reaction is L-glutamate 5-semialdehyde + phosphate + NADP(+) = L-glutamyl 5-phosphate + NADPH + H(+). It participates in amino-acid biosynthesis; L-proline biosynthesis; L-glutamate 5-semialdehyde from L-glutamate: step 2/2. Its function is as follows. Catalyzes the NADPH-dependent reduction of L-glutamate 5-phosphate into L-glutamate 5-semialdehyde and phosphate. The product spontaneously undergoes cyclization to form 1-pyrroline-5-carboxylate. The sequence is that of Gamma-glutamyl phosphate reductase from Xylella fastidiosa (strain M23).